A 389-amino-acid chain; its full sequence is WAT1-related protein At1g21890 (389 aa).

10 consecutive transmembrane segments (helical) span residues 13-33 (LAMI…MVSL), 40-60 (YVLA…FALF), 73-93 (IFLQ…NLYY), 102-122 (TFAS…AIIF), 142-162 (VITV…VDFI), 191-211 (WIPG…FFIL), 225-245 (LTTL…LVTV), 260-280 (FAAA…QGVV), 287-307 (VFVA…GVVV), and 312-332 (IHLG…TVVW). EamA domains lie at 23–150 (AGMY…GALL) and 205–331 (WAGF…YTVV). The tract at residues 339-361 (RMTDDDEDCKGLPIKSPVKPVDT) is disordered.

It belongs to the drug/metabolite transporter (DMT) superfamily. Plant drug/metabolite exporter (P-DME) (TC 2.A.7.4) family.

The protein localises to the membrane. In Arabidopsis thaliana (Mouse-ear cress), this protein is WAT1-related protein At1g21890.